We begin with the raw amino-acid sequence, 46 residues long: Spectrin alpha chain, non-erythrocytic 1 (46 aa).

Spectrin repeat units lie at residues 1–5 (AQLAD), 7–14 (FHLQQFFR), 15–20 (SQLLGS), 21–26 (AHEVQR), 27–35 (LAQFVEHWK), and 39–46 (DLFLTFAK).

It belongs to the spectrin family. In terms of assembly, associates with the gamma-tubulin complex in brain, but not in kidney, liver, sperm, or uterus. Like erythrocyte spectrin, the spectrin-like proteins are capable of forming dimers which can further associate to tetramers. Interacts with isoform 1 of ACP1. Interacts with CALM and EMD. Interacts (via C-terminal spectrin repeats) with TRPC4. Identified in a complex with ACTN4, CASK, IQGAP1, MAGI2, NPHS1 and SPTBN1. Interacts with CLN3; this interaction regulates the fodrin localization at the plasma membrane.

The protein resides in the cytoplasm. Its subcellular location is the cytoskeleton. It is found in the cell cortex. Functionally, fodrin, which seems to be involved in secretion, interacts with calmodulin in a calcium-dependent manner and is thus candidate for the calcium-dependent movement of the cytoskeleton at the membrane. The protein is Spectrin alpha chain, non-erythrocytic 1 (SPTAN1) of Capra hircus (Goat).